The sequence spans 2137 residues: MAYFLPSFFQKRLLRYALSRLELVDTEALDLDSLGIRWGQRSTVELRDIGLRLEKLATLLQLPASSELLSAKVQFLKITVPADIYSSGIICEASGINVHLQLPSEESFGAAKDENPNSRRPSQAGTHDSSSDHILPTPADLAESFLDAEPKEEKEELQAAITSRSQVLHRTSASISDDEEELGLGNEGVSLPSFVAAFLKGVAERLQVKVDNVSIRVDMETKQEGVVKREPENKPDNVTGLLTVREVSVGAVSSATSSSEEEKLSRNRNRPIVISDINMALISEPIVFSNYSRFAPPTSPTTPVQPKSSEPSSRIPSPLPGQASDADSVLAMTRSTILEPSQEHSIQDIEEPGVGRMEGSAYTYDGRFSDADTDDENRSDGYLEGSQQFLDDDKLLDNPAYLDSVIDSQLHDDDLEPPEDLVPQDDQFPPSSETLRSQTPEVHMHRETSPSNIDTEHTAPFSHYGDGSFMDRSPHGSQPYLETDHVATPDVSHSASSPSGSLPSRENSDRQTAPPSESGSVGSSDVANGGELSESKLFSNEEAQSMYMSAISHGSSRSFVPNIPGAWDLPESTVVRDVHAGTQLTDAADAKQDVQDETLISTPKLTAQAASALTEKRSFGEQSECPSEAREPDLTPLSPTLSKLSDVAKRFLRIDRISISIPVGEDRRHTDETVRSADVNSASDSLKDSAMRSGHSSTESELLSSTMYASARLRSDSISSEPSFEGTLPRSPPRQANKADHGPISKSQPGDIAVEISAVDVRFDNAIGWLVVKTGQRVLHAFRDGGNVSSGKPAPESVQTRHSLALTLHNFCIKYVDHIPGQTYALNDYDPHSSSPFGLPHEDIILRATASGLTARYLADKNVTKFGLDVSKFVFGFASDDLISFSESLKMRESTRDVLSPVNGDISLSLTKSSDSASLTITTLPLRLYLNVQRLEEVFGRVGGLSTILELGNSISSVSSGKNMKRDSQRRARGVHFESSPPPENNLQANPQLSWKVNARVGGIVFDVAGETHYLRLKTTAVKVVSRFEGIGVQIDKAKLSGPLPLDDSRDAPAKINLSNIRVEFLYSPKEPDLDRLLAIITPSKDKYDEDDDIMLDTLFRQRRQGSVLRTTVAGAKIVVSRTSDLESLSQLEEELGKLSTVAKYLPEDDRPGILTLTLIRELESQVYLGGPVGNITTHLRNAEAAYISMPSLIAAQLGTIKVVRNGSEELVGEALPASGSQGQNQSQLPILMARYIADEMDPTIKIKSHNLRVEYTIPSIIAFLGLSEDQTTGDVAANMANSLANIAESQHLHRNASEISIGSKGRQASAKPSRLAFALRDCVLGLNPRGTTAKGLVVLTNAKFSAAISDSGCSEAMLDIKKASIMLIDDVKNMGLAENLHRGRSTIPQSDQIQSFIDMGFVPVSSISSAMATVKLMQLDDDGTKSLDVELKDDLLILETCADSTQTLISIINGLQPPTPPSVAVKYRTEVLPIEDMLASFSGDAFAMDPPPEQAEIPEAPTIVEPEDGGPGIEDELEYVSDFYPVKSGPDNLPPNESAVPSESNDLLDSFHSQYYVSSSVSDLEFKEDHFANHSAVGGTAHRWDSTQNTYGLTDDSKIRKSPLRIRVRDAHIIWNLFDGYDWQRTRDTISKAVKDVEKRATERRARAGSRASPGFEEEEESVIGDCLFNSIYIGIPANKDPRELRNDINHNIDDLASETGSYATTTTVTGATARQGQSPSYRGRRLKLSRSKYHKMTFELKGICADFVVFPPGSEETQSSLDVRVNDLEIFDHVPTSTWKKFATYMHEAGERESGASMVHLEMLTVRPVPELAASELVLKATLLPLRLHVDQDALDFICRFFEFRDDSALTPSSPADIPFLQRVEVNAVPVKLDFKPKRVDYAGLRSGRTTEFMNFFVLDGADMVMRHVIIYGVSGFDKLGQTLNDIWMPDIKRNQLPGVLAGLAPIRSLVNVGGGVKDLVVVPMREYRKDGRLVRSIQKGALAFAKTTSNELVKLGAKLAIGTQTVLQGAEEMLTTPTAPTLGSEEDMIDEEEANKISPYADQPVGVVQGLRGAFRGLERDLLLARDAIVAVPGEIVESGSAKAAARAVFKRAPTVILRPAIGVSKAVGQTLLGAGNTLDPSNRRKIEDKYKRH.

Disordered stretches follow at residues 108–137, 296–325, 339–384, 410–531, 612–640, and 666–749; these read FGAAKDENPNSRRPSQAGTHDSSSDHILPT, PPTSPTTPVQPKSSEPSSRIPSPLPGQASD, EPSQ…GYLE, LHDD…NGGE, ALTEKRSFGEQSECPSEAREPDLTPLSPT, and DRRH…KSQP. 2 stretches are compositionally biased toward polar residues: residues 118-128 and 301-315; these read SRRPSQAGTHD and TTPVQPKSSEPSSRI. The span at 413–423 shows a compositional bias: acidic residues; the sequence is DDLEPPEDLVP. Residues 429–440 are compositionally biased toward polar residues; the sequence is PPSSETLRSQTP. The segment covering 488–505 has biased composition (low complexity); that stretch reads TPDVSHSASSPSGSLPSR. Positions 510-526 are enriched in polar residues; it reads RQTAPPSESGSVGSSDV. The span at 666–675 shows a compositional bias: basic and acidic residues; the sequence is DRRHTDETVR. Residues 696–706 show a composition bias toward low complexity; that stretch reads SSTESELLSST.

It belongs to the ATG2 family.

The protein localises to the preautophagosomal structure membrane. It is found in the endoplasmic reticulum membrane. It carries out the reaction a 1,2-diacyl-sn-glycero-3-phosphocholine(in) = a 1,2-diacyl-sn-glycero-3-phosphocholine(out). The enzyme catalyses a 1,2-diacyl-sn-glycero-3-phospho-L-serine(in) = a 1,2-diacyl-sn-glycero-3-phospho-L-serine(out). The catalysed reaction is a 1,2-diacyl-sn-glycero-3-phosphoethanolamine(in) = a 1,2-diacyl-sn-glycero-3-phosphoethanolamine(out). Its function is as follows. Lipid transfer protein required for autophagosome completion and peroxisome degradation. Tethers the edge of the isolation membrane (IM) to the endoplasmic reticulum (ER) and mediates direct lipid transfer from ER to IM for IM expansion. Atg2 binds to the ER exit site (ERES), which is the membrane source for autophagosome formation, using basic residues in its N-terminal region (NR) and to the expanding edge of the IM through its C-terminal region. The latter binding is assisted by an atg18-PtdIns3P interaction. Atg2 then extracts phospholipids from the membrane source using its NR and transfers them to atg9 to the IM through its predicted beta-sheet-rich structure for membrane expansion. The sequence is that of Autophagy-related protein 2 (atg2) from Neosartorya fischeri (strain ATCC 1020 / DSM 3700 / CBS 544.65 / FGSC A1164 / JCM 1740 / NRRL 181 / WB 181) (Aspergillus fischerianus).